A 269-amino-acid polypeptide reads, in one-letter code: Expansin-B11 (269 aa).

Residues 1-30 (MTVVSIMWSLVQVQVLVAVALAFLVGGAWC) form the signal peptide. Asparagine 40 carries N-linked (GlcNAc...) asparagine glycosylation. The Expansin-like EG45 domain occupies 69-175 (GGGCGYKDVN…RRVKCKYGSK (107 aa)). 3 disulfide bridges follow: cysteine 72-cysteine 100, cysteine 103-cysteine 170, and cysteine 108-cysteine 114. The region spanning 187–268 (NYLALLVKYV…GWKPNTAYTA (82 aa)) is the Expansin-like CBD domain.

This sequence belongs to the expansin family. Expansin B subfamily. As to expression, expressed in pollen.

The protein resides in the secreted. It is found in the cell wall. The protein localises to the membrane. Its function is as follows. May aid fertilization by loosening the cell wall of the stigma and style, thereby facilitating penetration of the pollen tube. Acts selectively on grass cell walls, which are relatively poor in pectins and xyloglucans and rich in glucuronoarabinoxylans and (1-3),(1-4)-beta-D-glucans, when compared with cell walls of other angiosperms, including other monocots. This is Expansin-B11 (EXPB11) from Zea mays (Maize).